The following is a 166-amino-acid chain: Testis-expressed protein 51 (166 aa).

The N-terminal stretch at 1-15 is a signal peptide; that stretch reads MLPLLIICLLPAIEG. Residues 138–154 traverse the membrane as a helical segment; it reads SLWAVSLSSALLLAIAG.

It is found in the membrane. This chain is Testis-expressed protein 51, found in Homo sapiens (Human).